A 736-amino-acid chain; its full sequence is Dynamin-1-like protein (736 aa).

Position 1 is an N-acetylmethionine (methionine 1). In terms of domain architecture, Dynamin-type G spans 22 to 302; it reads IIQLPQIVVV…LMHHIRDCLP (281 aa). The G1 motif stretch occupies residues 32 to 39; that stretch reads GTQSSGKS. GTP is bound at residue 32-40; that stretch reads GTQSSGKSS. The segment at 58-60 is G2 motif; that stretch reads VTR. The tract at residues 146-149 is G3 motif; that stretch reads DLPG. The G4 motif stretch occupies residues 215-218; the sequence is TKLD. Residues 215–221 and 246–249 contribute to the GTP site; these read TKLDLMD and NRSQ. A G5 motif region spans residues 245–248; sequence VNRS. The middle domain stretch occupies residues 344–489; it reads YCNTIEGTAK…NEMVHNLVAI (146 aa). The interval 448-685 is interaction with GSK3B; sequence NYSTQELLRF…NHVKDTLQSE (238 aa). The tract at residues 502 to 569 is b domain; the sequence is ADACGLMNNN…IQDSRRETKN (68 aa). A disordered region spans residues 523–590; that stretch reads ELPSAVSRDK…VQEPTTGNWR (68 aa). The residue at position 529 (serine 529) is a Phosphoserine. Residues lysine 532 and lysine 535 each participate in a glycyl lysine isopeptide (Lys-Gly) (interchain with G-Cter in SUMO) cross-link. Low complexity predominate over residues 537 to 554; it reads PSALAPASQEPSPAASAE. Serine 548 is subject to Phosphoserine. A compositionally biased stretch (basic and acidic residues) spans 555–568; the sequence is ADGKLIQDSRRETK. Glycyl lysine isopeptide (Lys-Gly) (interchain with G-Cter in SUMO) cross-links involve residues lysine 558 and lysine 568. Residues threonine 585 and threonine 586 are each glycosylated (O-linked (GlcNAc) threonine). Residue lysine 594 forms a Glycyl lysine isopeptide (Lys-Gly) (interchain with G-Cter in SUMO) linkage. At lysine 597 the chain carries N6-acetyllysine; alternate. A Glycyl lysine isopeptide (Lys-Gly) (interchain with G-Cter in SUMO); alternate cross-link involves residue lysine 597. Residue lysine 606 forms a Glycyl lysine isopeptide (Lys-Gly) (interchain with G-Cter in SUMO) linkage. Serine 607 carries the post-translational modification Phosphoserine. Residue lysine 608 forms a Glycyl lysine isopeptide (Lys-Gly) (interchain with G-Cter in SUMO) linkage. Phosphoserine; by CDK1 and PINK1 is present on serine 616. Serine 637 bears the Phosphoserine; by CAMK1 and PKA mark. Cysteine 644 carries the S-nitrosocysteine modification. The GED domain occupies 644–735; it reads CEVIERLIKS…IIAEIRETHL (92 aa). The important for homodimerization stretch occupies residues 654–668; the sequence is YFLIVRKNIQDSVPK.

This sequence belongs to the TRAFAC class dynamin-like GTPase superfamily. Dynamin/Fzo/YdjA family. As to quaternary structure, homotetramer; dimerizes through the N-terminal GTP-middle region of one molecule binding to the GED domain of another DNM1L molecule. Oligomerizes in a GTP-dependent manner to form membrane-associated tubules with a spiral pattern. Interacts with GSK3B and MARCHF5. Interacts (via the GTPase and B domains) with UBE2I; the interaction promotes sumoylation of DNM1L, mainly in its B domain. Interacts with PPP3CA; the interaction dephosphorylates DNM1L and regulates its transition to mitochondria. Interacts with BCL2L1 isoform BCL-X(L) and CLTA; DNM1L and BCL2L1 isoform BCL-X(L) may form a complex in synaptic vesicles that also contains clathrin and MFF. Interacts with MFF; the interaction is inhibited by C11orf65/MFI. Interacts with FIS1; may form part of a larger protein complex at the endoplasmic reticulum-mitochondrial interface during mitochondrial fission. Interacts with CANX. Interacts with BCAP31. Interacts with MIEF2 and MIEF1; GTP-dependent, regulates GTP hydrolysis and DNM1L oligomerization. Interacts with PGAM5; this interaction leads to dephosphorylation at Ser-656 and activation of GTPase activity and eventually to mitochondria fragmentation. Interacts with RALBP1; during mitosis, recruits DNM1L to the mitochondrion and mediates its activation by the mitotic kinase cyclin B-CDK1. Interacts with FUNDC1; this interaction recruits DNM1L/DRP1 at ER-mitochondria contact sites. In terms of processing, phosphorylation/dephosphorylation events on two sites near the GED domain regulate mitochondrial fission. Phosphorylation on Ser-637 by CAMK1 and PKA inhibits the GTPase activity, leading to a defect in mitochondrial fission promoting mitochondrial elongation. Dephosphorylated on this site by PPP3CA which promotes mitochondrial fission. Phosphorylation on Ser-616 by CDK1 and PINK1 activates the GTPase activity and promotes mitochondrial fission. Phosphorylated in a circadian manner at Ser-637. Dephosphorylated by PGAM5. Sumoylated on various lysine residues within the B domain, probably by MUL1. Sumoylation positively regulates mitochondrial fission. Desumoylated by SENP5 during G2/M transition of mitosis. Appears to be linked to its catalytic activity. Post-translationally, S-nitrosylation increases DNM1L dimerization, mitochondrial fission and causes neuronal damage. In terms of processing, ubiquitination by MARCHF5 affects mitochondrial morphology. O-GlcNAcylation augments the level of the GTP-bound active form of DNM1L and induces translocation from the cytoplasm to mitochondria in cardiomyocytes. It also decreases phosphorylation at Ser-637. In terms of tissue distribution, ubiquitously expressed with highest levels found in skeletal muscles, heart, kidney and brain. Isoform 1 is brain-specific. Isoform 2 and isoform 3 are predominantly expressed in testis and skeletal muscles respectively. Isoform 4 is weakly expressed in brain, heart and kidney. Isoform 5 is dominantly expressed in liver, heart and kidney. Isoform 6 is expressed in neurons.

The protein resides in the cytoplasm. It localises to the cytosol. It is found in the golgi apparatus. Its subcellular location is the endomembrane system. The protein localises to the mitochondrion outer membrane. The protein resides in the peroxisome. It localises to the membrane. It is found in the clathrin-coated pit. Its subcellular location is the cytoplasmic vesicle. The protein localises to the secretory vesicle. The protein resides in the synaptic vesicle membrane. It catalyses the reaction GTP + H2O = GDP + phosphate + H(+). Its activity is regulated as follows. GTPase activity is increased by binding to phospholipid membranes. In terms of biological role, functions in mitochondrial and peroxisomal division. Mediates membrane fission through oligomerization into membrane-associated tubular structures that wrap around the scission site to constrict and sever the mitochondrial membrane through a GTP hydrolysis-dependent mechanism. The specific recruitment at scission sites is mediated by membrane receptors like MFF, MIEF1 and MIEF2 for mitochondrial membranes. While the recruitment by the membrane receptors is GTP-dependent, the following hydrolysis of GTP induces the dissociation from the receptors and allows DNM1L filaments to curl into closed rings that are probably sufficient to sever a double membrane. Acts downstream of PINK1 to promote mitochondrial fission in a PRKN-dependent manner. Plays an important role in mitochondrial fission during mitosis. Through its function in mitochondrial division, ensures the survival of at least some types of postmitotic neurons, including Purkinje cells, by suppressing oxidative damage. Required for normal brain development, including that of cerebellum. Facilitates developmentally regulated apoptosis during neural tube formation. Required for a normal rate of cytochrome c release and caspase activation during apoptosis; this requirement may depend upon the cell type and the physiological apoptotic cues. Required for formation of endocytic vesicles. Proposed to regulate synaptic vesicle membrane dynamics through association with BCL2L1 isoform Bcl-X(L) which stimulates its GTPase activity in synaptic vesicles; the function may require its recruitment by MFF to clathrin-containing vesicles. Required for programmed necrosis execution. Rhythmic control of its activity following phosphorylation at Ser-637 is essential for the circadian control of mitochondrial ATP production. Functionally, inhibits peroxisomal division when overexpressed. The sequence is that of Dynamin-1-like protein from Homo sapiens (Human).